A 273-amino-acid chain; its full sequence is 4-diphosphocytidyl-2-C-methyl-D-erythritol kinase (273 aa).

The active site involves lysine 12. 90 to 100 (PVASGIGGGSA) contributes to the ATP binding site. Residue aspartate 122 is part of the active site.

The protein belongs to the GHMP kinase family. IspE subfamily.

The catalysed reaction is 4-CDP-2-C-methyl-D-erythritol + ATP = 4-CDP-2-C-methyl-D-erythritol 2-phosphate + ADP + H(+). The protein operates within isoprenoid biosynthesis; isopentenyl diphosphate biosynthesis via DXP pathway; isopentenyl diphosphate from 1-deoxy-D-xylulose 5-phosphate: step 3/6. Functionally, catalyzes the phosphorylation of the position 2 hydroxy group of 4-diphosphocytidyl-2C-methyl-D-erythritol. The chain is 4-diphosphocytidyl-2-C-methyl-D-erythritol kinase from Paracoccus denitrificans (strain Pd 1222).